The chain runs to 305 residues: Aurora/IPL1-related protein kinase 2 (305 aa).

In terms of domain architecture, Protein kinase spans 30-280 (FEIGRPLGKG…LEQVKEHYWI (251 aa)). ATP is bound by residues 36-44 (LGKGKFGSV) and K59. D153 (proton acceptor) is an active-site residue.

It belongs to the protein kinase superfamily. Ser/Thr protein kinase family. Aurora subfamily. In terms of assembly, component of the CPC complex which consists of icp-1; csc-1; bir-1 and air-2. Within the complex, interacts with icp-1; csc-1 and bir-1. Interacts with zen-4. Interacts with tlk-1 and bmk-1. Post-translationally, phosphorylated. Increased phosphorylation upon chromatin obstructions at anaphase.

It localises to the cytoplasm. The protein resides in the cytoskeleton. Its subcellular location is the chromosome. The protein localises to the midbody. It is found in the spindle. It carries out the reaction L-seryl-[protein] + ATP = O-phospho-L-seryl-[protein] + ADP + H(+). It catalyses the reaction L-threonyl-[protein] + ATP = O-phospho-L-threonyl-[protein] + ADP + H(+). Its function is as follows. Serine/threonine-protein kinase component of the chromosomal passenger complex (CPC), a complex that acts as a key regulator of chromosome segregation and cytokinesis. The CPC complex has essential functions at the centromere in ensuring correct chromosome alignment and segregation. Required for histone H3 phosphorylation during segregation of homologous chromosomes in meiosis and mitosis. Required for histone H3 'Ser-10' phosphorylation. Phosphorylates tlk-1 at 'Ser-634', which enhances its activity. Phosphorylates zen-4 at 'Ser-680'. Required for the recruitment of bub-1 to the ring-shaped domain between chromosomes during meiotic anaphase I. Also required for the localization of the condensin I complex subunit smc-4 to mitotic chromosomes. Acts at the spindle midzone and the midbody to prevent cleavage furrow regression upon chromatin obstructions during cytokinesis. The protein is Aurora/IPL1-related protein kinase 2 of Caenorhabditis elegans.